The sequence spans 246 residues: Large ribosomal subunit protein uL30-like 1 (246 aa).

Phosphoserine is present on Ser54.

It belongs to the universal ribosomal protein uL30 family.

The polypeptide is Large ribosomal subunit protein uL30-like 1 (Rpl7l1) (Mus musculus (Mouse)).